A 246-amino-acid chain; its full sequence is Probable transcriptional regulatory protein Pden_1905 (246 aa).

Positions 1-21 (MAGHSKWANIQHRKGKQDKLR) are disordered.

The protein belongs to the TACO1 family.

It localises to the cytoplasm. In Paracoccus denitrificans (strain Pd 1222), this protein is Probable transcriptional regulatory protein Pden_1905.